The primary structure comprises 430 residues: CinA-like protein (430 aa).

It belongs to the CinA family.

The protein is CinA-like protein of Mycobacterium tuberculosis (strain ATCC 25177 / H37Ra).